Reading from the N-terminus, the 259-residue chain is 5'-nucleotidase SurE (259 aa).

D8, D9, S39, and N96 together coordinate a divalent metal cation.

It belongs to the SurE nucleotidase family. A divalent metal cation is required as a cofactor.

Its subcellular location is the cytoplasm. It catalyses the reaction a ribonucleoside 5'-phosphate + H2O = a ribonucleoside + phosphate. Its function is as follows. Nucleotidase that shows phosphatase activity on nucleoside 5'-monophosphates. The chain is 5'-nucleotidase SurE from Pelotomaculum thermopropionicum (strain DSM 13744 / JCM 10971 / SI).